The sequence spans 209 residues: Elongation factor Ts, chloroplastic (209 aa).

This sequence belongs to the EF-Ts family.

The protein resides in the plastid. The protein localises to the chloroplast. In terms of biological role, associates with the EF-Tu.GDP complex and induces the exchange of GDP to GTP. It remains bound to the aminoacyl-tRNA.EF-Tu.GTP complex up to the GTP hydrolysis stage on the ribosome. This is Elongation factor Ts, chloroplastic (tsf) from Cyanidioschyzon merolae (strain NIES-3377 / 10D) (Unicellular red alga).